Here is a 130-residue protein sequence, read N- to C-terminus: Methylglyoxal synthase (130 aa).

An MGS-like domain is found at M1–A130. Substrate is bound by residues H11, K15, T37–T40, and S57–G58. The active-site Proton donor/acceptor is D63. Residue H90 participates in substrate binding.

The protein belongs to the methylglyoxal synthase family.

The catalysed reaction is dihydroxyacetone phosphate = methylglyoxal + phosphate. Its function is as follows. Catalyzes the formation of methylglyoxal from dihydroxyacetone phosphate. The protein is Methylglyoxal synthase of Burkholderia mallei (strain NCTC 10247).